Reading from the N-terminus, the 3391-residue chain is Genome polyprotein (3391 aa).

The tract at residues 1-15 (MNDQRKEAKNTPFNM) is interaction with host EXOC1. Residues 1-101 (MNDQRKEAKN…LNILNRRRRS (101 aa)) are Cytoplasmic-facing. A hydrophobic; homodimerization of capsid protein C region spans residues 37–72 (MLQGRGPLKLYMALVAFLRFLTIPPTAGILKRWGTI). A propeptide spans 101 to 114 (SAGMIIMLIPTVMA) (ER anchor for the Capsid protein C, removed in mature form by serine protease NS3). A propeptide spans 101–114 (SAGMIIMLIPTVMA) (ER anchor for the capsid protein C, removed in mature form by serine protease NS3). The chain crosses the membrane as a helical span at residues 102–122 (AGMIIMLIPTVMAFHLTTRNG). The Extracellular portion of the chain corresponds to 123–242 (EPHMIVSRQE…HVQRIETWIL (120 aa)). Residue N183 is glycosylated (N-linked (GlcNAc...) asparagine; by host). A helical transmembrane segment spans residues 243 to 260 (RHPGFTMMAAILAYTIGT). Residue T261 is a topological domain, cytoplasmic. The chain crosses the membrane as a helical span at residues 262-280 (HFQRALILILLTAVTPSMT). Residues 281 to 727 (MRCIGMSNRD…QVFGAIYGAA (447 aa)) are Extracellular-facing. Disulfide bonds link C283–C310, C340–C401, C354–C385, and C372–C396. The N-linked (GlcNAc...) asparagine; by host glycan is linked to N347. The tract at residues 378–391 (DRGWGNGCGLFGKG) is fusion peptide. An N-linked (GlcNAc...) asparagine; by host glycan is attached at N433. 2 disulfide bridges follow: C465–C565 and C582–C613. The helical transmembrane segment at 728-748 (FSGVSWTMKILIGVIITWIGM) threads the bilayer. The Cytoplasmic portion of the chain corresponds to 749–752 (NSRS). The chain crosses the membrane as a helical span at residues 753-773 (TSLSVTLVLVGIVTLYLGVMV). Residues 774–1195 (QADSGCVVSW…MVGATMTDDI (422 aa)) lie on the Extracellular side of the membrane. Intrachain disulfides connect C779–C790, C830–C918, C954–C998, C1055–C1104, C1066–C1088, and C1087–C1091. N-linked (GlcNAc...) asparagine; by host glycans are attached at residues N905 and N982. An N-linked (GlcNAc...) asparagine; by host glycan is attached at N1134. A helical transmembrane segment spans residues 1196–1220 (GMGVTYLALLAAFKVRPTFAAGLLL). Residues 1221-1226 (RKLTSK) lie on the Cytoplasmic side of the membrane. A helical transmembrane segment spans residues 1227–1245 (ELMMTTIGIVLSSQSTIPE). Over 1246 to 1269 (TILELTDALALGMMVLKMVRNMEK) the chain is Lumenal. A helical membrane pass occupies residues 1270–1290 (YQLAVTIMAILCVPNAVILQN). A1291 is a topological domain (cytoplasmic). The chain crosses the membrane as a helical span at residues 1292–1310 (WKVSCTILAVVSVSPLFLT). Residues 1311–1317 (SSQQKTD) are Lumenal-facing. Residues 1318–1338 (WIPLALTIKGLNPTAIFLTTL) traverse the membrane as a helical segment. Topologically, residues 1339-1346 (SRTSKKRS) are cytoplasmic. A helical membrane pass occupies residues 1347-1367 (WPLNEAIMAVGMVSILASSLL). Topologically, residues 1368–1370 (KND) are lumenal. The helical transmembrane segment at 1371–1391 (IPMTGPLVAGGLLTVCYVLTG) threads the bilayer. The Cytoplasmic portion of the chain corresponds to 1392–1447 (RSADLELERAADVKWEDQAEISGSSPILSITISEDGSMSIKNEEEEQTLTILIRRG). An interacts with and activates NS3 protease region spans residues 1398 to 1437 (LERAADVKWEDQAEISGSSPILSITISEDGSMSIKNEEEE). The helical intramembrane region spans 1448-1468 (LLVISGLFPVSIPITAAAWYL). At 1469-2147 (WEVKKQRAGV…LSELPETLET (679 aa)) the chain is on the cytoplasmic side. Residues 1476–1653 (AGVLWDVPSP…EKSIEDNPEI (178 aa)) form the Peptidase S7 domain. Active-site charge relay system; for serine protease NS3 activity residues include H1526, D1550, and S1610. Positions 1655–1811 (DDIFRKRRLT…QSNAPIIDEE (157 aa)) constitute a Helicase ATP-binding domain. The important for RNA-binding stretch occupies residues 1659–1662 (RKRR). An ATP-binding site is contributed by 1668–1675 (LHPGAGKT). A DEAH box motif is present at residues 1759 to 1762 (DEAH). The region spanning 1821–1988 (SGHEWVTDFK…IIPSMFEPER (168 aa)) is the Helicase C-terminal domain. N6-acetyllysine; by host is present on K1863. The chain crosses the membrane as a helical span at residues 2148 to 2168 (LLLLTLLATVTGGIFLFLMSA). Residues 2169–2170 (RG) are Lumenal-facing. Residues 2171-2191 (IGKMTLGMCCIITASILLWYA) constitute an intramembrane region (helical). Position 2192 (Q2192) is a topological domain, lumenal. A helical membrane pass occupies residues 2193–2213 (IQPHWIAASIILEFFLIVLLI). Residues 2214–2228 (PEPEKQRTPQDNQLT) lie on the Cytoplasmic side of the membrane. Residues 2229–2249 (YVVIAILTVVAATMANEMGFL) form a helical membrane-spanning segment. The Lumenal segment spans residues 2250-2274 (EKTKKDLGLGSIATQQPESNILDID). Positions 2275–2295 (LRPASAWTLYAVATTFVTPML) form an intramembrane region, helical. Residues 2296–2316 (RHSIENSSVNVSLTAIANQAT) lie on the Lumenal side of the membrane. N-linked (GlcNAc...) asparagine; by host glycosylation is found at N2301 and N2305. The helical intramembrane region spans 2317 to 2337 (VLMGLGKGWPLSKMDIGVPLL). The Lumenal portion of the chain corresponds to 2338–2347 (AIGCYSQVNP). The helical transmembrane segment at 2348-2368 (TTLTAALFLLVAHYAIIGPAL) threads the bilayer. The Cytoplasmic segment spans residues 2369–2413 (QAKASREAQKRAAAGIMKNPTVDGITVIDLDPIPYDPKFEKQLGQ). Residues 2414–2434 (VMLLVLCVTQVLMMRTTWALC) form a helical membrane-spanning segment. The Lumenal portion of the chain corresponds to 2435–2459 (EALTLATGPISTLSEGNPGRFWNTT). N2457 carries N-linked (GlcNAc...) asparagine; by host glycosylation. The chain crosses the membrane as a helical span at residues 2460–2480 (IAVSMANIFRGSYLAGAGLLF). At 2481–3391 (SIMKNTTNTR…REEEEAGVLW (911 aa)) the chain is on the cytoplasmic side. In terms of domain architecture, mRNA cap 0-1 NS5-type MT spans 2493–2755 (TGNIGETLGE…DVDLGSGTRN (263 aa)). S2547 contributes to the S-adenosyl-L-methionine binding site. Phosphoserine is present on S2547. K2552 acts as the For 2'-O-MTase activity in catalysis. The SUMO-interacting motif signature appears at 2568–2571 (VVDL). G2577, W2578, T2595, K2596, D2622, and V2623 together coordinate S-adenosyl-L-methionine. Residue D2637 is the For 2'-O-MTase activity of the active site. Position 2638 (I2638) interacts with S-adenosyl-L-methionine. Catalysis depends on for 2'-O-MTase activity residues K2672 and E2708. Position 2710 (Y2710) interacts with S-adenosyl-L-methionine. Zn(2+) contacts are provided by E2929, H2933, C2938, and C2941. In terms of domain architecture, RdRp catalytic spans 3020–3169 (AMYADDTAGW…PLDDRLPSAL (150 aa)). The Zn(2+) site is built by H3203, C3219, and C3338.

This sequence in the N-terminal section; belongs to the class I-like SAM-binding methyltransferase superfamily. mRNA cap 0-1 NS5-type methyltransferase family. Homodimer. Interacts (via N-terminus) with host EXOC1 (via C-terminus); this interaction results in EXOC1 degradation through the proteasome degradation pathway. As to quaternary structure, forms heterodimers with envelope protein E in the endoplasmic reticulum and Golgi. In terms of assembly, homodimer; in the endoplasmic reticulum and Golgi. Interacts with protein prM. Interacts with non-structural protein 1. Homodimer; Homohexamer when secreted. Interacts with envelope protein E. Interacts with host PRKAA1. As to quaternary structure, interacts (via N-terminus) with serine protease NS3. In terms of assembly, forms a heterodimer with serine protease NS3. May form homooligomers. Forms a heterodimer with NS2B. Interacts with NS4B. Interacts with unphosphorylated RNA-directed RNA polymerase NS5; this interaction stimulates RNA-directed RNA polymerase NS5 guanylyltransferase activity. Interacts with host SHFL. As to quaternary structure, interacts with host MAVS; this interaction inhibits the synthesis of IFN-beta. Interacts with host SHFL. Interacts with host AUP1; the interaction occurs in the presence of Dengue virus NS4B and induces lipophagy which facilitates production of virus progeny particles. May interact with host SRPRA and SEC61G. In terms of assembly, interacts with serine protease NS3. Homodimer. Interacts with host STAT2; this interaction inhibits the phosphorylation of the latter, and, when all viral proteins are present (polyprotein), targets STAT2 for degradation. Interacts with serine protease NS3. Interacts with host PAF1 complex; the interaction may prevent the recruitment of the PAF1 complex to interferon-responsive genes, and thus reduces the immune response. In terms of processing, specific enzymatic cleavages in vivo yield mature proteins. Cleavages in the lumen of endoplasmic reticulum are performed by host signal peptidase, whereas cleavages in the cytoplasmic side are performed by serine protease NS3. Signal cleavage at the 2K-4B site requires a prior NS3 protease-mediated cleavage at the 4A-2K site. Post-translationally, cleaved in post-Golgi vesicles by a host furin, releasing the mature small envelope protein M, and peptide pr. This cleavage is incomplete as up to 30% of viral particles still carry uncleaved prM. N-glycosylated. In terms of processing, N-glycosylated. The excreted form is glycosylated and this is required for efficient secretion of the protein from infected cells. Post-translationally, acetylated by host KAT5. Acetylation modulates NS3 RNA-binding and unwinding activities and plays an important positive role for viral replication. Sumoylation of RNA-directed RNA polymerase NS5 increases NS5 protein stability allowing proper viral RNA replication. In terms of processing, phosphorylated on serines residues. This phosphorylation may trigger NS5 nuclear localization.

The protein resides in the virion. It is found in the host nucleus. Its subcellular location is the host cytoplasm. It localises to the host perinuclear region. The protein localises to the secreted. The protein resides in the virion membrane. It is found in the host endoplasmic reticulum membrane. Its subcellular location is the host mitochondrion. The catalysed reaction is Selective hydrolysis of -Xaa-Xaa-|-Yaa- bonds in which each of the Xaa can be either Arg or Lys and Yaa can be either Ser or Ala.. It carries out the reaction RNA(n) + a ribonucleoside 5'-triphosphate = RNA(n+1) + diphosphate. It catalyses the reaction a ribonucleoside 5'-triphosphate + H2O = a ribonucleoside 5'-diphosphate + phosphate + H(+). The enzyme catalyses ATP + H2O = ADP + phosphate + H(+). The catalysed reaction is a 5'-end (5'-triphosphoguanosine)-ribonucleoside in mRNA + S-adenosyl-L-methionine = a 5'-end (N(7)-methyl 5'-triphosphoguanosine)-ribonucleoside in mRNA + S-adenosyl-L-homocysteine. It carries out the reaction a 5'-end (N(7)-methyl 5'-triphosphoguanosine)-ribonucleoside in mRNA + S-adenosyl-L-methionine = a 5'-end (N(7)-methyl 5'-triphosphoguanosine)-(2'-O-methyl-ribonucleoside) in mRNA + S-adenosyl-L-homocysteine + H(+). Plays a role in virus budding by binding to the cell membrane and gathering the viral RNA into a nucleocapsid that forms the core of a mature virus particle. During virus entry, may induce genome penetration into the host cytoplasm after hemifusion induced by the surface proteins. Can migrate to the cell nucleus where it modulates host functions. Overcomes the anti-viral effects of host EXOC1 by sequestering and degrading the latter through the proteasome degradation pathway. Functionally, inhibits RNA silencing by interfering with host Dicer. Its function is as follows. Prevents premature fusion activity of envelope proteins in trans-Golgi by binding to envelope protein E at pH6.0. After virion release in extracellular space, gets dissociated from E dimers. In terms of biological role, acts as a chaperone for envelope protein E during intracellular virion assembly by masking and inactivating envelope protein E fusion peptide. prM is the only viral peptide matured by host furin in the trans-Golgi network probably to avoid catastrophic activation of the viral fusion activity in acidic Golgi compartment prior to virion release. prM-E cleavage is inefficient, and many virions are only partially matured. These uncleaved prM would play a role in immune evasion. May play a role in virus budding. Exerts cytotoxic effects by activating a mitochondrial apoptotic pathway through M ectodomain. May display a viroporin activity. Functionally, binds to host cell surface receptor and mediates fusion between viral and cellular membranes. Envelope protein is synthesized in the endoplasmic reticulum in the form of heterodimer with protein prM. They play a role in virion budding in the ER, and the newly formed immature particle is covered with 60 spikes composed of heterodimer between precursor prM and envelope protein E. The virion is transported to the Golgi apparatus where the low pH causes dissociation of PrM-E heterodimers and formation of E homodimers. prM-E cleavage is inefficient, and many virions are only partially matured. These uncleaved prM would play a role in immune evasion. Its function is as follows. Involved in immune evasion, pathogenesis and viral replication. Once cleaved off the polyprotein, is targeted to three destinations: the viral replication cycle, the plasma membrane and the extracellular compartment. Essential for viral replication. Required for formation of the replication complex and recruitment of other non-structural proteins to the ER-derived membrane structures. Excreted as a hexameric lipoparticle that plays a role against host immune response. Antagonizing the complement function. Binds to the host macrophages and dendritic cells. Inhibits signal transduction originating from Toll-like receptor 3 (TLR3). Mediates complement activation, which may contribute to the pathogenesis of the vascular leakage that occurs in severe dengue disease. Activates autophagy through the AMPK/ERK/mTOR signaling pathway. Mechanistically, acts as the assembly platform for STK11-AMPK interactions and promotes STK11-AMPK interactions. In turn, promotes phosphorylation of the AMPK kinase structural domain and activates AMPK, thereby positively regulating the AMPK/ERK/mTOR signaling pathway and inducing autophagy. In terms of biological role, disrupts the host endothelial glycocalyx layer of host pulmonary microvascular endothelial cells, inducing degradation of sialic acid and shedding of heparan sulfate proteoglycans. NS1 induces expression of sialidases, heparanase, and activates cathepsin L, which activates heparanase via enzymatic cleavage. These effects are probably linked to the endothelial hyperpermeability observed in severe dengue disease. Component of the viral RNA replication complex that functions in virion assembly and antagonizes the host immune response. Functionally, required cofactor for the serine protease function of NS3. May have membrane-destabilizing activity and form viroporins. Its function is as follows. Displays three enzymatic activities: serine protease, NTPase and RNA helicase. NS3 serine protease, in association with NS2B, performs its autocleavage and cleaves the polyprotein at dibasic sites in the cytoplasm: C-prM, NS2A-NS2B, NS2B-NS3, NS3-NS4A, NS4A-2K and NS4B-NS5. NS3 RNA helicase binds RNA and unwinds dsRNA in the 3' to 5' direction. In terms of biological role, regulates the ATPase activity of the NS3 helicase activity. NS4A allows NS3 helicase to conserve energy during unwinding. Plays a role in the inhibition of the host innate immune response. Interacts with host MAVS and thereby prevents the interaction between RIGI and MAVS. In turn, IFN-beta production is impaired. Interacts with host AUP1 which mediates induction of lipophagy in host cells and facilitates production of virus progeny particles. Functions as a signal peptide for NS4B and is required for the interferon antagonism activity of the latter. Functionally, induces the formation of ER-derived membrane vesicles where the viral replication takes place. Inhibits interferon (IFN)-induced host STAT1 phosphorylation and nuclear translocation, thereby preventing the establishment of cellular antiviral state by blocking the IFN-alpha/beta pathway. Its function is as follows. Replicates the viral (+) and (-) RNA genome, and performs the capping of genomes in the cytoplasm. NS5 methylates viral RNA cap at guanine N-7 and ribose 2'-O positions. Besides its role in RNA genome replication, also prevents the establishment of cellular antiviral state by blocking the interferon-alpha/beta (IFN-alpha/beta) signaling pathway. Inhibits host TYK2 and STAT2 phosphorylation, thereby preventing activation of JAK-STAT signaling pathway. May reduce immune responses by preventing the recruitment of the host PAF1 complex to interferon-responsive genes. This Dengue virus type 2 (strain 16681-PDK53) (DENV-2) protein is Genome polyprotein.